A 607-amino-acid chain; its full sequence is DNA mismatch repair protein MutL (607 aa).

Belongs to the DNA mismatch repair MutL/HexB family.

Functionally, this protein is involved in the repair of mismatches in DNA. It is required for dam-dependent methyl-directed DNA mismatch repair. May act as a 'molecular matchmaker', a protein that promotes the formation of a stable complex between two or more DNA-binding proteins in an ATP-dependent manner without itself being part of a final effector complex. The polypeptide is DNA mismatch repair protein MutL (Paramagnetospirillum magneticum (strain ATCC 700264 / AMB-1) (Magnetospirillum magneticum)).